Here is a 659-residue protein sequence, read N- to C-terminus: Pseudouridylate synthase 7 homolog (659 aa).

Residue methionine 1 is modified to N-acetylmethionine. Polar residues-rich tracts occupy residues 1–10 and 39–54; these read MEMTEMTSVS and CPTT…SLPS. The interval 1–99 is disordered; it reads MEMTEMTSVS…EEEEEEAESF (99 aa). Serine 10 bears the Phosphoserine mark. The segment covering 75-98 has biased composition (acidic residues); it reads PSEEEEEEDGLSEEEEEEEEEAES. Serine 125 is subject to Phosphoserine. The Nucleophile role is filled by aspartate 292. A TRUD domain is found at 368 to 578; that stretch reads GFINYYGMQR…SGAYRKIIIR (211 aa).

Belongs to the pseudouridine synthase TruD family. Interacts with SIRT1.

The protein resides in the nucleus. The enzyme catalyses a uridine in tRNA = a pseudouridine in tRNA. The catalysed reaction is uridine(13) in tRNA = pseudouridine(13) in tRNA. It catalyses the reaction a uridine in mRNA = a pseudouridine in mRNA. In terms of biological role, pseudouridylate synthase that catalyzes pseudouridylation of RNAs. Acts as a regulator of protein synthesis in embryonic stem cells by mediating pseudouridylation of RNA fragments derived from tRNAs (tRFs): pseudouridylated tRFs inhibit translation by targeting the translation initiation complex. Also catalyzes pseudouridylation of mRNAs: mediates pseudouridylation of mRNAs with the consensus sequence 5'-UGUAG-3'. Acts as a regulator of pre-mRNA splicing by mediating pseudouridylation of pre-mRNAs at locations associated with alternatively spliced regions. Pseudouridylation of pre-mRNAs near splice sites directly regulates mRNA splicing and mRNA 3'-end processing. In addition to mRNAs and tRNAs, binds other types of RNAs, such as snRNAs, Y RNAs and vault RNAs, suggesting that it can catalyze pseudouridylation of many RNA types. The sequence is that of Pseudouridylate synthase 7 homolog from Bos taurus (Bovine).